The sequence spans 325 residues: MAYELEFEKPLVELRKKISELKEFTKHRDVDFSDEINKLEARLEKLENDIYANLSPWDRVQIARHPNRPTTLDYIERLFTNFFECHGDRCFGDDEAIVGGIAKYHGLPVTVIGHQRGKDTKENIRRNFGMPHPEGYRKALRLMKQAEKFGRPIICFIDTKGAYPGKAAEERGQSEAIARNLFEMAGLTVPVVCVVIGEGGSGGALALGVGNYVHMLENSTYSVISPEGAAAILWKDASLAKKAAETMKITAKDLKQLGVIDEIIPEVRGGAHRNVDEQAKYIDDVLKRSLRELLPLHAEQLIAQRYEKYKKIGDFVESQQHVSVM.

Residues 35–292 (EINKLEARLE…DDVLKRSLRE (258 aa)) enclose the CoA carboxyltransferase C-terminal domain.

It belongs to the AccA family. As to quaternary structure, acetyl-CoA carboxylase is a heterohexamer composed of biotin carboxyl carrier protein (AccB), biotin carboxylase (AccC) and two subunits each of ACCase subunit alpha (AccA) and ACCase subunit beta (AccD).

It is found in the cytoplasm. The catalysed reaction is N(6)-carboxybiotinyl-L-lysyl-[protein] + acetyl-CoA = N(6)-biotinyl-L-lysyl-[protein] + malonyl-CoA. Its pathway is lipid metabolism; malonyl-CoA biosynthesis; malonyl-CoA from acetyl-CoA: step 1/1. Component of the acetyl coenzyme A carboxylase (ACC) complex. First, biotin carboxylase catalyzes the carboxylation of biotin on its carrier protein (BCCP) and then the CO(2) group is transferred by the carboxyltransferase to acetyl-CoA to form malonyl-CoA. The protein is Acetyl-coenzyme A carboxylase carboxyl transferase subunit alpha of Anoxybacillus flavithermus (strain DSM 21510 / WK1).